Reading from the N-terminus, the 495-residue chain is Glycogen synthase (495 aa).

Residue lysine 15 participates in ADP-alpha-D-glucose binding.

This sequence belongs to the glycosyltransferase 1 family. Bacterial/plant glycogen synthase subfamily.

The catalysed reaction is [(1-&gt;4)-alpha-D-glucosyl](n) + ADP-alpha-D-glucose = [(1-&gt;4)-alpha-D-glucosyl](n+1) + ADP + H(+). It participates in glycan biosynthesis; glycogen biosynthesis. Functionally, synthesizes alpha-1,4-glucan chains using ADP-glucose. The polypeptide is Glycogen synthase (Variovorax paradoxus (strain S110)).